Consider the following 601-residue polypeptide: Kelch-like ECH-associated protein 1A (601 aa).

Residues 44–117 (MDELRHHEML…VISRLIDFAY (74 aa)) enclose the BTB domain. The region spanning 153-253 (KNLEPSNVIG…LNAVHIYALP (101 aa)) is the BACK domain. Kelch repeat units lie at residues 292-337 (PTPH…PCSG), 338-388 (LGAC…PRNR), 389-435 (VGVG…ARLG), 436-482 (AGVA…VRSG), 484-529 (GVVC…CRSA), and 530-576 (HGVS…GRSG).

This sequence belongs to the KEAP1 family. Homodimer and heterodimer; heterodimerizes with keap1b. Component of the BCR(KEAP1) E3 ubiquitin ligase complex, at least composed of 2 molecules of cul3, 2 molecules of keap1 (keap1a and/or keap1b), and rbx1. Interacts with nfe2l2/nrf2; the interaction is direct. In terms of processing, non-enzymatic covalent modifications of reactive cysteines by electrophile metabolites inactivate the BCR(KEAP1) complex. Widely expressed.

The protein resides in the cytoplasm. It is found in the nucleus. Its pathway is protein modification; protein ubiquitination. Ubiquitin ligase activity of the BCR(KEAP1) complex is inhibited by oxidative stress and electrophile metabolites such as sulforaphane. Electrophile metabolites react with reactive cysteine residues in keap1 and trigger non-enzymatic covalent modifications of these cysteine residues, leading to inactivate the ubiquitin ligase activity of the BCR(KEAP1) complex. Its function is as follows. Substrate-specific adapter of a BCR (BTB-CUL3-RBX1) E3 ubiquitin ligase complex that regulates the response to oxidative stress by targeting nfe2l2/nrf2 for ubiquitination. Keap1 acts as a key sensor of oxidative and electrophilic stress: in normal conditions, the BCR(KEAP1) complex mediates ubiquitination and degradation of nfe2l2/nrf2, a transcription factor regulating expression of many cytoprotective genes. In response to oxidative stress, different electrophile metabolites trigger non-enzymatic covalent modifications of highly reactive cysteine residues in KEAP1, leading to inactivate the ubiquitin ligase activity of the BCR(KEAP1) complex, promoting nfe2l2/nrf2 nuclear accumulation and expression of phase II detoxifying enzymes. The chain is Kelch-like ECH-associated protein 1A from Danio rerio (Zebrafish).